The primary structure comprises 462 residues: ATP synthase subunit beta (462 aa).

ATP is bound at residue Gly-152–Thr-159.

Belongs to the ATPase alpha/beta chains family. As to quaternary structure, F-type ATPases have 2 components, CF(1) - the catalytic core - and CF(0) - the membrane proton channel. CF(1) has five subunits: alpha(3), beta(3), gamma(1), delta(1), epsilon(1). CF(0) has three main subunits: a(1), b(2) and c(9-12). The alpha and beta chains form an alternating ring which encloses part of the gamma chain. CF(1) is attached to CF(0) by a central stalk formed by the gamma and epsilon chains, while a peripheral stalk is formed by the delta and b chains.

The protein localises to the cell inner membrane. It catalyses the reaction ATP + H2O + 4 H(+)(in) = ADP + phosphate + 5 H(+)(out). Functionally, produces ATP from ADP in the presence of a proton gradient across the membrane. The catalytic sites are hosted primarily by the beta subunits. The chain is ATP synthase subunit beta from Tolumonas auensis (strain DSM 9187 / NBRC 110442 / TA 4).